Reading from the N-terminus, the 154-residue chain is 6,7-dimethyl-8-ribityllumazine synthase (154 aa).

5-amino-6-(D-ribitylamino)uracil is bound by residues Phe22, 56–58, and 80–82; these read SFE and AVI. 85–86 lines the (2S)-2-hydroxy-3-oxobutyl phosphate pocket; the sequence is ST. His88 serves as the catalytic Proton donor. Residue Tyr113 participates in 5-amino-6-(D-ribitylamino)uracil binding. Arg127 serves as a coordination point for (2S)-2-hydroxy-3-oxobutyl phosphate.

Belongs to the DMRL synthase family. In terms of assembly, forms an icosahedral capsid composed of 60 subunits, arranged as a dodecamer of pentamers.

It catalyses the reaction (2S)-2-hydroxy-3-oxobutyl phosphate + 5-amino-6-(D-ribitylamino)uracil = 6,7-dimethyl-8-(1-D-ribityl)lumazine + phosphate + 2 H2O + H(+). It participates in cofactor biosynthesis; riboflavin biosynthesis; riboflavin from 2-hydroxy-3-oxobutyl phosphate and 5-amino-6-(D-ribitylamino)uracil: step 1/2. Its function is as follows. Catalyzes the formation of 6,7-dimethyl-8-ribityllumazine by condensation of 5-amino-6-(D-ribitylamino)uracil with 3,4-dihydroxy-2-butanone 4-phosphate. This is the penultimate step in the biosynthesis of riboflavin. The protein is 6,7-dimethyl-8-ribityllumazine synthase of Persephonella marina (strain DSM 14350 / EX-H1).